The primary structure comprises 302 residues: Probable proteasome inhibitor (302 aa).

An N-acetylalanine modification is found at alanine 2. 2 disordered regions span residues 151 to 188 (LDGK…QIHP) and 259 to 302 (ARFD…SDFI). A compositionally biased stretch (pro residues) spans 259 to 269 (ARFDPYGPPGV).

Belongs to the proteasome inhibitor PI31 family.

Its function is as follows. Could play an important role in control of proteasome function. Inhibits the hydrolysis of protein and peptide substrates by the 20S proteasome. This chain is Probable proteasome inhibitor, found in Arabidopsis thaliana (Mouse-ear cress).